The chain runs to 81 residues: Small cysteine-rich protein 6 (81 aa).

The N-terminal stretch at methionine 1–serine 23 is a signal peptide. Residues glycine 24 to asparagine 25 constitute a propeptide that is removed on maturation.

This sequence belongs to the Cnidaria small cysteine-rich protein (SCRiP) family. beta subfamily. Post-translationally, contains 4 disulfide bonds.

The protein resides in the secreted. It is found in the nematocyst. Its function is as follows. Induces neurotoxic symptoms on zebrafish. Has also been claimed to be implied in calcification, but tests on homolog proteins suggest that proteins of this family have a neurotoxic function and not a calcification function. This chain is Small cysteine-rich protein 6, found in Orbicella faveolata (Mountainous star coral).